The chain runs to 243 residues: uncharacterized protein (243 aa).

It localises to the nucleus. It is found in the nucleolus. This is an uncharacterized protein from Schizosaccharomyces pombe (strain 972 / ATCC 24843) (Fission yeast).